A 426-amino-acid chain; its full sequence is Tetracenomycin polyketide synthase ketoacyl synthase alpha subunit (426 aa).

In terms of domain architecture, Ketosynthase family 3 (KS3) spans 6 to 420 (EKRVVITGIG…GFQSAAVLAR (415 aa)). Active-site for beta-ketoacyl synthase activity residues include cysteine 173, histidine 313, and histidine 350.

This sequence belongs to the thiolase-like superfamily. Beta-ketoacyl-ACP synthases family. In terms of assembly, the tetracenomycin polyketide synthase (TCM PKS) is composed of a ketosynthase complex (TcmKL), an acyl carrier protein (TcmM), a cyclase (TcmN) and a probable second cyclase (TcmJ). TcmK and TcmL form a heterodimeric complex.

The enzyme catalyses 10 malonyl-CoA + 8 H(+) = tetracenomycin F2 + 10 CO2 + 10 CoA + 2 H2O. It participates in antibiotic biosynthesis; tetracenomycin C biosynthesis. Functionally, involved in the biosynthesis of tetracenomycin C (TCM C). Part of a type II polyketide synthase (PKS) that catalyzes the synthesis of tetracenomycin F2 (TCM F2), a precursor of TCM C, from malonyl-CoA. TcmK and TcmL form a heterodimeric alpha-beta complex that catalyzes the condensation reactions between the growing acyl-enzyme chain and the malonyl-CoA extender units. The protein is Tetracenomycin polyketide synthase ketoacyl synthase alpha subunit of Streptomyces glaucescens.